The following is a 368-amino-acid chain: tRNA/tmRNA (uracil-C(5))-methyltransferase (368 aa).

S-adenosyl-L-methionine is bound by residues Gln-192, Tyr-220, Asn-225, Glu-241, and Asp-301. The Nucleophile role is filled by Cys-326. Catalysis depends on Glu-360, which acts as the Proton acceptor.

This sequence belongs to the class I-like SAM-binding methyltransferase superfamily. RNA M5U methyltransferase family. TrmA subfamily.

The catalysed reaction is uridine(54) in tRNA + S-adenosyl-L-methionine = 5-methyluridine(54) in tRNA + S-adenosyl-L-homocysteine + H(+). The enzyme catalyses uridine(341) in tmRNA + S-adenosyl-L-methionine = 5-methyluridine(341) in tmRNA + S-adenosyl-L-homocysteine + H(+). In terms of biological role, dual-specificity methyltransferase that catalyzes the formation of 5-methyluridine at position 54 (m5U54) in all tRNAs, and that of position 341 (m5U341) in tmRNA (transfer-mRNA). The sequence is that of tRNA/tmRNA (uracil-C(5))-methyltransferase from Actinobacillus pleuropneumoniae serotype 5b (strain L20).